The following is a 116-amino-acid chain: Protein Wnt-5b (116 aa).

Ser-1 carries O-palmitoleoyl serine; by PORCN lipidation. 2 N-linked (GlcNAc...) asparagine glycosylation sites follow: Asn-69 and Asn-83. Cysteines 82 and 97 form a disulfide.

Belongs to the Wnt family. Palmitoleoylation is required for efficient binding to frizzled receptors. Depalmitoleoylation leads to Wnt signaling pathway inhibition.

The protein resides in the secreted. It is found in the extracellular space. Its subcellular location is the extracellular matrix. In terms of biological role, ligand for members of the frizzled family of seven transmembrane receptors. Probable developmental protein. May be a signaling molecule which affects the development of discrete regions of tissues. Is likely to signal over only few cell diameters. The chain is Protein Wnt-5b (WNT-5B) from Alopias vulpinus (Common thresher shark).